An 803-amino-acid chain; its full sequence is Bifunctional enzyme MurC/Ddl (803 aa).

Positions 1–446 are UDP-N-acetylmuramate--alanine ligase; the sequence is MMKSLFYHFI…GEKLRDFEPQ (446 aa). Residues 111–117 and 600–655 each bind ATP; these read GSHGKTT and VEAF…CKEI. A D-alanine--D-alanine ligase region spans residues 447 to 803; sequence KLHLGIICGG…SFVDQAFAIQ (357 aa). Residues 567–778 form the ATP-grasp domain; it reads KRFMSDLGIP…YEQIVHQLVI (212 aa). Residues Asp732, Glu745, and Asn747 each coordinate Mg(2+).

This sequence in the N-terminal section; belongs to the MurCDEF family. It in the C-terminal section; belongs to the D-alanine--D-alanine ligase family. It depends on Mg(2+) as a cofactor. Mn(2+) serves as cofactor.

The protein resides in the cytoplasm. The enzyme catalyses UDP-N-acetyl-alpha-D-muramate + L-alanine + ATP = UDP-N-acetyl-alpha-D-muramoyl-L-alanine + ADP + phosphate + H(+). It catalyses the reaction 2 D-alanine + ATP = D-alanyl-D-alanine + ADP + phosphate + H(+). Its pathway is cell wall biogenesis; peptidoglycan biosynthesis. Functionally, cell wall formation. In Chlamydia trachomatis serovar D (strain ATCC VR-885 / DSM 19411 / UW-3/Cx), this protein is Bifunctional enzyme MurC/Ddl (murC/ddl).